The following is a 327-amino-acid chain: GTPase Obg (327 aa).

The Obg domain occupies 1-159; it reads MQFIDQANII…WEVQLELKLL (159 aa). The OBG-type G domain occupies 160 to 327; the sequence is AEVGIIGLPN…SLLSEVWKRI (168 aa). Residues 166 to 173, 191 to 195, 213 to 216, 280 to 283, and 309 to 311 contribute to the ATP site; these read GLPNAGKS, FTTLI, DIPG, NKME, and SSS. 2 residues coordinate Mg(2+): serine 173 and threonine 193.

It belongs to the TRAFAC class OBG-HflX-like GTPase superfamily. OBG GTPase family. Monomer. It depends on Mg(2+) as a cofactor.

It is found in the cytoplasm. In terms of biological role, an essential GTPase which binds GTP, GDP and possibly (p)ppGpp with moderate affinity, with high nucleotide exchange rates and a fairly low GTP hydrolysis rate. Plays a role in control of the cell cycle, stress response, ribosome biogenesis and in those bacteria that undergo differentiation, in morphogenesis control. This is GTPase Obg from Prochlorococcus marinus (strain MIT 9215).